The following is a 187-amino-acid chain: Ribose 1,5-bisphosphate phosphokinase PhnN (187 aa).

10 to 17 (GPSGSGKD) is a binding site for ATP.

It belongs to the ribose 1,5-bisphosphokinase family.

The enzyme catalyses alpha-D-ribose 1,5-bisphosphate + ATP = 5-phospho-alpha-D-ribose 1-diphosphate + ADP. It functions in the pathway metabolic intermediate biosynthesis; 5-phospho-alpha-D-ribose 1-diphosphate biosynthesis; 5-phospho-alpha-D-ribose 1-diphosphate from D-ribose 5-phosphate (route II): step 3/3. In terms of biological role, catalyzes the phosphorylation of ribose 1,5-bisphosphate to 5-phospho-D-ribosyl alpha-1-diphosphate (PRPP). This Klebsiella pneumoniae subsp. pneumoniae (strain ATCC 700721 / MGH 78578) protein is Ribose 1,5-bisphosphate phosphokinase PhnN.